The following is a 314-amino-acid chain: Ribonuclease Z (314 aa).

Zn(2+)-binding residues include H62, H64, D66, H67, H139, D210, and H268. The active-site Proton acceptor is the D66.

It belongs to the RNase Z family. In terms of assembly, homodimer. Zn(2+) serves as cofactor.

It catalyses the reaction Endonucleolytic cleavage of RNA, removing extra 3' nucleotides from tRNA precursor, generating 3' termini of tRNAs. A 3'-hydroxy group is left at the tRNA terminus and a 5'-phosphoryl group is left at the trailer molecule.. Functionally, zinc phosphodiesterase, which displays some tRNA 3'-processing endonuclease activity. Probably involved in tRNA maturation, by removing a 3'-trailer from precursor tRNA. The sequence is that of Ribonuclease Z from Acaryochloris marina (strain MBIC 11017).